A 351-amino-acid polypeptide reads, in one-letter code: Ion-translocating oxidoreductase complex subunit D (351 aa).

4 helical membrane-spanning segments follow: residues 18–38, 40–60, 87–107, and 121–141; these read IMLL…YFFG, GSLI…GAVL, LPPL…IVIA, and PAMV…TSWL. FMN phosphoryl threonine is present on T185. 5 helical membrane-spanning segments follow: residues 211 to 231, 241 to 261, 264 to 284, 298 to 318, and 320 to 340; these read VLAG…GLLL, IPVS…MIAP, FASP…FFIA, LIFG…GGYP, and GVAF…HYTQ.

It belongs to the NqrB/RnfD family. As to quaternary structure, the complex is composed of six subunits: RnfA, RnfB, RnfC, RnfD, RnfE and RnfG. The cofactor is FMN.

The protein localises to the cell inner membrane. Functionally, part of a membrane-bound complex that couples electron transfer with translocation of ions across the membrane. In Yersinia pseudotuberculosis serotype I (strain IP32953), this protein is Ion-translocating oxidoreductase complex subunit D.